Consider the following 413-residue polypeptide: PAB1-binding protein 2 (413 aa).

Low complexity predominate over residues 1–23; that stretch reads MSTETTKPSITTTPTTVLVSPNT. Positions 1–36 are disordered; it reads MSTETTKPSITTTPTTVLVSPNTLKRKKGEDTSEEQ. 3 consecutive KH domains span residues 66–130, 148–213, and 330–394; these read DVHL…YGMI, EISI…TFYI, and FVQQ…IMLI.

Interacts with PAB1.

Its subcellular location is the nucleus. The chain is PAB1-binding protein 2 (PBP2) from Saccharomyces cerevisiae (strain ATCC 204508 / S288c) (Baker's yeast).